Reading from the N-terminus, the 166-residue chain is Regulatory protein RecX (166 aa).

Belongs to the RecX family.

Its subcellular location is the cytoplasm. Functionally, modulates RecA activity. The chain is Regulatory protein RecX from Escherichia coli (strain SE11).